Here is a 218-residue protein sequence, read N- to C-terminus: Large ribosomal subunit protein uL3 (218 aa).

Positions 132 to 152 (FKGQGASHGTQAVHRRPGSIG) are disordered.

This sequence belongs to the universal ribosomal protein uL3 family. Part of the 50S ribosomal subunit. Forms a cluster with proteins L14 and L19.

In terms of biological role, one of the primary rRNA binding proteins, it binds directly near the 3'-end of the 23S rRNA, where it nucleates assembly of the 50S subunit. The sequence is that of Large ribosomal subunit protein uL3 from Rhodococcus erythropolis (strain PR4 / NBRC 100887).